Here is a 143-residue protein sequence, read N- to C-terminus: Large ribosomal subunit protein uL11 (143 aa).

It belongs to the universal ribosomal protein uL11 family. In terms of assembly, part of the ribosomal stalk of the 50S ribosomal subunit. Interacts with L10 and the large rRNA to form the base of the stalk. L10 forms an elongated spine to which L12 dimers bind in a sequential fashion forming a multimeric L10(L12)X complex. In terms of processing, one or more lysine residues are methylated.

Functionally, forms part of the ribosomal stalk which helps the ribosome interact with GTP-bound translation factors. In Aromatoleum aromaticum (strain DSM 19018 / LMG 30748 / EbN1) (Azoarcus sp. (strain EbN1)), this protein is Large ribosomal subunit protein uL11.